The chain runs to 547 residues: Glucose-6-phosphate isomerase (547 aa).

The active-site Proton donor is the E353. Residues H384 and K512 contribute to the active site.

The protein belongs to the GPI family.

The protein localises to the cytoplasm. The enzyme catalyses alpha-D-glucose 6-phosphate = beta-D-fructose 6-phosphate. The protein operates within carbohydrate biosynthesis; gluconeogenesis. Its pathway is carbohydrate degradation; glycolysis; D-glyceraldehyde 3-phosphate and glycerone phosphate from D-glucose: step 2/4. Its function is as follows. Catalyzes the reversible isomerization of glucose-6-phosphate to fructose-6-phosphate. This chain is Glucose-6-phosphate isomerase, found in Campylobacter jejuni subsp. doylei (strain ATCC BAA-1458 / RM4099 / 269.97).